Consider the following 425-residue polypeptide: Apolipoprotein N-acyltransferase (425 aa).

6 consecutive transmembrane segments (helical) span residues leucine 12–isoleucine 32, asparagine 34–leucine 54, serine 60–phenylalanine 80, leucine 88–leucine 108, phenylalanine 120–phenylalanine 140, and tyrosine 142–leucine 162. Residues valine 201–serine 425 form the CN hydrolase domain. Glutamate 242 serves as the catalytic Proton acceptor. Residue lysine 296 is part of the active site. Residue cysteine 349 is the Nucleophile of the active site.

The protein belongs to the CN hydrolase family. Apolipoprotein N-acyltransferase subfamily.

The protein resides in the cell inner membrane. It catalyses the reaction N-terminal S-1,2-diacyl-sn-glyceryl-L-cysteinyl-[lipoprotein] + a glycerophospholipid = N-acyl-S-1,2-diacyl-sn-glyceryl-L-cysteinyl-[lipoprotein] + a 2-acyl-sn-glycero-3-phospholipid + H(+). It functions in the pathway protein modification; lipoprotein biosynthesis (N-acyl transfer). In terms of biological role, catalyzes the phospholipid dependent N-acylation of the N-terminal cysteine of apolipoprotein, the last step in lipoprotein maturation. The polypeptide is Apolipoprotein N-acyltransferase (Helicobacter pylori (strain ATCC 700392 / 26695) (Campylobacter pylori)).